We begin with the raw amino-acid sequence, 197 residues long: Na(+)-translocating NADH-quinone reductase subunit E (197 aa).

Transmembrane regions (helical) follow at residues 11–31 (SVFI…FLAV), 35–55 (VSTA…SVPV), 76–96 (FLKF…LEMF), 108–128 (LGIY…VSFM), 139–159 (VVYG…LAGI), and 175–195 (LGIT…FSGI).

This sequence belongs to the NqrDE/RnfAE family. Composed of six subunits; NqrA, NqrB, NqrC, NqrD, NqrE and NqrF.

Its subcellular location is the cell inner membrane. The enzyme catalyses a ubiquinone + n Na(+)(in) + NADH + H(+) = a ubiquinol + n Na(+)(out) + NAD(+). Functionally, NQR complex catalyzes the reduction of ubiquinone-1 to ubiquinol by two successive reactions, coupled with the transport of Na(+) ions from the cytoplasm to the periplasm. NqrA to NqrE are probably involved in the second step, the conversion of ubisemiquinone to ubiquinol. The polypeptide is Na(+)-translocating NADH-quinone reductase subunit E (Neisseria meningitidis serogroup C (strain 053442)).